Here is a 405-residue protein sequence, read N- to C-terminus: Argininosuccinate synthase (405 aa).

ATP contacts are provided by residues 10 to 18 (AYSGGLDTS) and A37. The L-citrulline site is built by Y88 and S93. Position 118 (G118) interacts with ATP. T120, N124, and D125 together coordinate L-aspartate. N124 contacts L-citrulline. Residues R128, S177, S186, E263, and Y275 each contribute to the L-citrulline site.

This sequence belongs to the argininosuccinate synthase family. Type 1 subfamily. Homotetramer.

It is found in the cytoplasm. It carries out the reaction L-citrulline + L-aspartate + ATP = 2-(N(omega)-L-arginino)succinate + AMP + diphosphate + H(+). It functions in the pathway amino-acid biosynthesis; L-arginine biosynthesis; L-arginine from L-ornithine and carbamoyl phosphate: step 2/3. This is Argininosuccinate synthase from Acetivibrio thermocellus (strain ATCC 27405 / DSM 1237 / JCM 9322 / NBRC 103400 / NCIMB 10682 / NRRL B-4536 / VPI 7372) (Clostridium thermocellum).